The following is a 356-amino-acid chain: Guanine nucleotide-binding protein alpha-2 subunit (356 aa).

The N-myristoyl glycine moiety is linked to residue Gly2. Residue Cys4 is the site of S-palmitoyl cysteine attachment. The 325-residue stretch at Arg32 to Tyr356 folds into the G-alpha domain. The tract at residues Lys35–Thr48 is G1 motif. GTP is bound by residues Glu43, Gly45, Lys46, Ser47, Thr48, Asp153, Leu178, Thr184, Gly206, Asn272, Lys273, Asp275, and Ala328. Ser47 contributes to the Mg(2+) binding site. Residues Asp176 to Thr184 form a G2 motif region. Thr184 lines the Mg(2+) pocket. The G3 motif stretch occupies residues Phe199–Arg208. Residues Ile268–Asp275 form a G4 motif region. Residues Thr326–Thr331 are G5 motif.

This sequence belongs to the G-alpha family. G(q) subfamily. As to quaternary structure, g proteins are composed of 3 units; alpha, beta and gamma. The alpha chain contains the guanine nucleotide binding site. It depends on Mg(2+) as a cofactor.

Its function is as follows. Guanine nucleotide-binding proteins (G proteins) are involved as modulators or transducers in various transmembrane signaling systems. Involved in behavioral responses to P.aeruginosa by controlling the expression of daf-7, a member of the TGF-beta family, in ASJ sensory neurons. This Caenorhabditis elegans protein is Guanine nucleotide-binding protein alpha-2 subunit (gpa-2).